Here is an 821-residue protein sequence, read N- to C-terminus: Probable E3 ubiquitin-protein ligase hulA (821 aa).

The 112-residue stretch at 1–112 (MGSNLPAQPN…QMGGDEMLTR (112 aa)) folds into the C2 domain. Disordered stretches follow at residues 140–240 (PNQA…WERR) and 255–359 (RTTT…YFVD). Polar residues-rich tracts occupy residues 151 to 173 (AQSSTSSGLVPQVSSASHPSVSP), 181 to 201 (AASNVSLHPQRVPSTTRPTST), 217 to 228 (QGSRTNLSSFED), and 255 to 272 (RTTTWTRPSSNYNEQTQR). The 34-residue stretch at 231-264 (GRLPAGWERREDNLGRTYYVDHNTRTTTWTRPSS) folds into the WW 1 domain. Residues 281 to 296 (LERRAHQSRMLPEDRT) show a composition bias toward basic and acidic residues. Residues 297 to 306 (GANSPNLQES) are compositionally biased toward polar residues. Low complexity predominate over residues 311-339 (PQQAHTPPAGGSASAVSMMATGATTAGTG). WW domains follow at residues 339 to 372 (GELPPGWEQRTTPEGRPYFVDHNTRTTTWVDPRR) and 399 to 432 (GPLPSGWEMRLTNTARVYFVDHNTKTTTWDDPRL). An HECT domain is found at 488 to 821 (SASDLKKRLM…VEETLGFGQE (334 aa)). C789 (glycyl thioester intermediate) is an active-site residue.

It belongs to the RSP5/NEDD4 family. As to quaternary structure, interacts with creD.

Its subcellular location is the cytoplasm. The catalysed reaction is S-ubiquitinyl-[E2 ubiquitin-conjugating enzyme]-L-cysteine + [acceptor protein]-L-lysine = [E2 ubiquitin-conjugating enzyme]-L-cysteine + N(6)-ubiquitinyl-[acceptor protein]-L-lysine.. The protein operates within protein modification; protein ubiquitination. Its function is as follows. E3 ubiquitin-protein ligase which accepts ubiquitin from an E2 ubiquitin-conjugating enzyme in the form of a thioester and then directly transfers the ubiquitin to targeted substrates. Probably involved in the regulatory network controlling carbon source utilization. This chain is Probable E3 ubiquitin-protein ligase hulA (hulA), found in Aspergillus niger (strain ATCC MYA-4892 / CBS 513.88 / FGSC A1513).